The sequence spans 136 residues: Glutamate-rich protein 4 (136 aa).

The tract at residues 92–136 (EEEEEEEQEEKSCVEENKGPEEKQDEERSRSSYPAQRLPDFGMTI) is disordered. A compositionally biased stretch (basic and acidic residues) spans 101-121 (EKSCVEENKGPEEKQDEERSR).

The polypeptide is Glutamate-rich protein 4 (Erich4) (Mus musculus (Mouse)).